Consider the following 177-residue polypeptide: Ubiquinol-cytochrome c reductase iron-sulfur subunit (177 aa).

Residues 18–38 (IVLTASSVAAVGAACAFWPII) traverse the membrane as a helical segment. The 88-residue stretch at 88-175 (ARAVKMSELI…YIFISDTKIR (88 aa)) folds into the Rieske domain. Residues C120, H122, C139, and H142 each coordinate [2Fe-2S] cluster. C125 and C141 are joined by a disulfide.

The protein belongs to the Rieske iron-sulfur protein family. The main subunits of complex b-c1 are: cytochrome b, cytochrome c1 and the Rieske protein. It depends on [2Fe-2S] cluster as a cofactor.

The protein resides in the cell membrane. The catalysed reaction is a quinol + 2 Fe(III)-[cytochrome c](out) = a quinone + 2 Fe(II)-[cytochrome c](out) + 2 H(+)(out). In terms of biological role, component of the ubiquinol-cytochrome c reductase complex (complex III or cytochrome b-c1 complex), which is a respiratory chain that generates an electrochemical potential coupled to ATP synthesis. This chain is Ubiquinol-cytochrome c reductase iron-sulfur subunit (petA), found in Rickettsia typhi (strain ATCC VR-144 / Wilmington).